We begin with the raw amino-acid sequence, 282 residues long: Insulin-like growth factor-binding protein 7 (282 aa).

The signal sequence occupies residues 1–26; that stretch reads MERPSLRALLLGAAGLLLLLLPLSSS. An IGFBP N-terminal domain is found at 28 to 114; it reads SSDTCGPCEP…PGVSGVCVCK (87 aa). 7 disulfides stabilise this stretch: C32–C57, C35–C59, C40–C60, C48–C63, C71–C87, C81–C111, and C120–C156. Residues 105-158 enclose the Kazal-like domain; it reads PGVSGVCVCKSRYPVCGSDGTTYPSGCQLRAASQRAESRGEKAITQVSKGTCEQ. Residues 160–264 form the Ig-like C2-type domain; that stretch reads PSIVTPPKDI…GQASASAKIT (105 aa). N171 is a glycosylation site (N-linked (GlcNAc...) asparagine). C181 and C248 are disulfide-bonded. At S239 the chain carries Phosphoserine; by FAM20C.

As to quaternary structure, may interact with VPS24/CHMP3; the relevance of such interaction however remains unclear. Interacts with CD93; this interaction plays a role in endothelial cells angiogenesis. Post-translationally, N-glycosylated.

The protein localises to the secreted. Binds IGF1 and IGF2 with a relatively low affinity. Stimulates prostacyclin (PGI2) production. Stimulates cell adhesion. Acts as a ligand for CD93 to play a role in angiogenesis. In Homo sapiens (Human), this protein is Insulin-like growth factor-binding protein 7 (IGFBP7).